The following is a 174-amino-acid chain: Ubiquinone biosynthesis accessory factor UbiT (174 aa).

The SCP2 domain occupies 45 to 133 (LDDGELEFLE…LGLYVKNLMD (89 aa)).

It belongs to the UbiT family.

It functions in the pathway cofactor biosynthesis; ubiquinone biosynthesis. In terms of biological role, required for O(2)-independent ubiquinone (coenzyme Q) biosynthesis. Likely functions as an accessory factor. The chain is Ubiquinone biosynthesis accessory factor UbiT from Escherichia coli O157:H7.